A 333-amino-acid polypeptide reads, in one-letter code: Secreted mono- and diacylglycerol lipase 1 (333 aa).

The signal sequence occupies residues 1 to 16 (MMLILSILSIIAFAAA). Cystine bridges form between cysteine 56–cysteine 268 and cysteine 276–cysteine 298. The Nucleophile role is filled by serine 176. Residues aspartate 230 and histidine 288 contribute to the active site.

Belongs to the AB hydrolase superfamily. Lipase family. Class 3 subfamily.

The protein resides in the secreted. It catalyses the reaction a monoacylglycerol + H2O = glycerol + a fatty acid + H(+). The enzyme catalyses a diacylglycerol + H2O = a monoacylglycerol + a fatty acid + H(+). Functionally, secreted mono- and diacylglycerol lipase that allows the use of hydrolyzed lipids as carbon source and might play a role in pathogenicity. Shows lipolytic activity towards olive oil and p-nitrophenylpalmitate. The sequence is that of Secreted mono- and diacylglycerol lipase 1 from Fusarium solani (Filamentous fungus).